Here is a 304-residue protein sequence, read N- to C-terminus: MARAEGDSWDVASSVGATAAMVAAGRAVATRDPRGLIDDPYAAPLVRAVGIEFFTKVADGEFDITELDPSSAAEMQARIDEMALRTRFFDDYFLASTAGGIRQVVILASGLDSRAYRLPWPDGTVVYEIDQPAVIDFKTSILAGIGAEPTAERRTVAIDLREDWPAALRVAGFDSAAPTAWCAEGLLIYLPPEAQDLLFDNVTALSAAGSTVATEYVPGILNFDAEKARAASAQMRERGLDLDMPSLVYHGERKHVMEYLTSLGWTMAGLPRTDLFAKHGVPMVAHDNDPLGEIVYVSGTYQNR.

S-adenosyl-L-methionine contacts are provided by residues Asp-130 and 159–160 (DL).

It belongs to the UPF0677 family.

Functionally, exhibits S-adenosyl-L-methionine-dependent methyltransferase activity. In Mycobacterium sp. (strain MCS), this protein is Putative S-adenosyl-L-methionine-dependent methyltransferase Mmcs_1043.